The chain runs to 454 residues: UPF0210 protein Mhun_2657 (454 aa).

Belongs to the UPF0210 family.

The protein is UPF0210 protein Mhun_2657 of Methanospirillum hungatei JF-1 (strain ATCC 27890 / DSM 864 / NBRC 100397 / JF-1).